The following is a 91-amino-acid chain: Small ribosomal subunit protein uS19 (91 aa).

This sequence belongs to the universal ribosomal protein uS19 family.

Its function is as follows. Protein S19 forms a complex with S13 that binds strongly to the 16S ribosomal RNA. The protein is Small ribosomal subunit protein uS19 of Neorickettsia sennetsu (strain ATCC VR-367 / Miyayama) (Ehrlichia sennetsu).